The following is a 309-amino-acid chain: Peptide methionine sulfoxide reductase MsrA/MsrB (309 aa).

Residues 1–153 form a peptide methionine sulfoxide reductase A region; it reads MIYLAGGCFW…PNGYCHIDIN (153 aa). Cys-8 is a catalytic residue. Residues 170-293 form the MsrB domain; that stretch reads ATEIKEKLSA…NSLSITFIPK (124 aa). Catalysis depends on Cys-282, which acts as the Nucleophile.

This sequence in the N-terminal section; belongs to the MsrA Met sulfoxide reductase family. It in the C-terminal section; belongs to the MsrB Met sulfoxide reductase family.

It catalyses the reaction L-methionyl-[protein] + [thioredoxin]-disulfide + H2O = L-methionyl-(S)-S-oxide-[protein] + [thioredoxin]-dithiol. It carries out the reaction [thioredoxin]-disulfide + L-methionine + H2O = L-methionine (S)-S-oxide + [thioredoxin]-dithiol. The enzyme catalyses L-methionyl-[protein] + [thioredoxin]-disulfide + H2O = L-methionyl-(R)-S-oxide-[protein] + [thioredoxin]-dithiol. In terms of biological role, has an important function as a repair enzyme for proteins that have been inactivated by oxidation. Catalyzes the reversible oxidation-reduction of methionine sulfoxide in proteins to methionine. The sequence is that of Peptide methionine sulfoxide reductase MsrA/MsrB (msrAB) from Streptococcus pyogenes serotype M18 (strain MGAS8232).